We begin with the raw amino-acid sequence, 668 residues long: UvrABC system protein B (668 aa).

One can recognise a Helicase ATP-binding domain in the interval 31 to 416 (QGITDGVPAQ…RGHIIEQIIR (386 aa)). 44-51 (GTTGSGKT) contributes to the ATP binding site. Residues 97 to 120 (YYDYYQPEAYIARSDTYIEKSLLI) carry the Beta-hairpin motif. A Helicase C-terminal domain is found at 433–596 (QIDDLLEEIR…ITPQPIIKPI (164 aa)). The UVR domain occupies 621-656 (EASIKTYEEAMYQAAQEFQFDEAAKYRDLMNAAKKQ).

It belongs to the UvrB family. Forms a heterotetramer with UvrA during the search for lesions. Interacts with UvrC in an incision complex.

The protein resides in the cytoplasm. In terms of biological role, the UvrABC repair system catalyzes the recognition and processing of DNA lesions. A damage recognition complex composed of 2 UvrA and 2 UvrB subunits scans DNA for abnormalities. Upon binding of the UvrA(2)B(2) complex to a putative damaged site, the DNA wraps around one UvrB monomer. DNA wrap is dependent on ATP binding by UvrB and probably causes local melting of the DNA helix, facilitating insertion of UvrB beta-hairpin between the DNA strands. Then UvrB probes one DNA strand for the presence of a lesion. If a lesion is found the UvrA subunits dissociate and the UvrB-DNA preincision complex is formed. This complex is subsequently bound by UvrC and the second UvrB is released. If no lesion is found, the DNA wraps around the other UvrB subunit that will check the other stand for damage. The sequence is that of UvrABC system protein B from Chlamydia trachomatis serovar D (strain ATCC VR-885 / DSM 19411 / UW-3/Cx).